Consider the following 150-residue polypeptide: AVQLVFTDAEKAEFKFGFKSKDGDNSITAKELGEFLESAGKSFSEEQLAQMISDVDTDKSGTIEFSEMLMGIAEKMMKWTWKKSHFQKAFDDMDKDGNGVLSPEELHLAMSTRIEPPMSKEAIDAIIAKADCDGDGKINRKEFVKLIKSS.

At alanine 1 the chain carries N-acetylalanine. EF-hand domains are found at residues threonine 7–serine 42, phenylalanine 43–lysine 78, tryptophan 81–proline 116, and methionine 118–serine 150. Ca(2+) is bound by residues aspartate 22, aspartate 24, serine 26, threonine 28, aspartate 56, aspartate 58, serine 60, threonine 62, glutamate 67, aspartate 94, aspartate 96, asparagine 98, glutamate 105, aspartate 131, aspartate 133, aspartate 135, lysine 137, and glutamate 142.

The protein resides in the nucleus. The protein localises to the cytoplasm. It is found in the cytoskeleton. Its subcellular location is the spindle. In terms of biological role, may play an important role in mitosis of sea urchin egg. May function as a Ca(2+)-dependent intracellular modulator of microtubule assembly. In Hemicentrotus pulcherrimus (Sea urchin), this protein is 15 kDa calcium-binding protein.